Here is a 740-residue protein sequence, read N- to C-terminus: Probable type IV piliation system protein DR_0774 (740 aa).

The N-terminal stretch at 1–20 is a signal peptide; it reads MNKRHALLLTAVLGMATAYA.

The protein belongs to the bacterial secretin family.

It is found in the cell envelope. Functionally, could be part of the type IV piliation system (T4P). May contribute at the cohesion between the S-layer and the outer membrane by forming oligomers. Could also be the main channel through which trafficking is managed. This Deinococcus radiodurans (strain ATCC 13939 / DSM 20539 / JCM 16871 / CCUG 27074 / LMG 4051 / NBRC 15346 / NCIMB 9279 / VKM B-1422 / R1) protein is Probable type IV piliation system protein DR_0774.